A 156-amino-acid polypeptide reads, in one-letter code: MPQLDKLTYFSQFFWLCLLFFTFYILLFNNNNGILGISRILKLRNQLLSHRGGEIRSKDPKNLEDILRKGFSTGLSYMYSSLSEVSQWCKTVDYLGKRRKITLISDFGEISGSRGMERQILYLISKSSYNTSSSRITCWKNIMLTHVLHGQGSIIS.

The chain crosses the membrane as a helical span at residues 8-28 (TYFSQFFWLCLLFFTFYILLF).

This sequence belongs to the ATPase protein YMF19 family. In terms of assembly, F-type ATPases have 2 components, CF(1) - the catalytic core - and CF(0) - the membrane proton channel. CF(1) has five subunits: alpha(3), beta(3), gamma(1), delta(1), epsilon(1). CF(0) has three main subunits: a, b and c.

It localises to the mitochondrion membrane. The catalysed reaction is ATP + H2O + 4 H(+)(in) = ADP + phosphate + 5 H(+)(out). Its function is as follows. This is one of the chains of the nonenzymatic component (CF(0) subunit) of the mitochondrial ATPase complex. The polypeptide is Putative ATP synthase protein YMF19 (YMF19) (Triticum aestivum (Wheat)).